Reading from the N-terminus, the 2212-residue chain is Voltage-dependent P/Q-type calcium channel subunit alpha-1A (2212 aa).

The Cytoplasmic segment spans residues 1–100; the sequence is MARFGDEMPG…KYAKKITEWP (100 aa). An I repeat occupies 87–365; sequence NVVRKYAKKI…LVLGVLSGEF (279 aa). Residues 101–119 form a helical membrane-spanning segment; that stretch reads PFEYMILATIIANCIVLAL. Topologically, residues 120–138 are extracellular; it reads EQHLPDDDKTPMSERLDDT. Residues 139 to 156 traverse the membrane as a helical segment; the sequence is EPYFIGIFCFEAGIKIVA. The Cytoplasmic portion of the chain corresponds to 157–168; that stretch reads LGFAFHKGSYLR. A helical membrane pass occupies residues 169-184; that stretch reads NGWNVMDFVVVLTGIL. At 185–192 the chain is on the extracellular side; that stretch reads ATVGTEFD. The chain crosses the membrane as a helical span at residues 193 to 211; the sequence is LRTLRAVRVLRPLKLVSGI. The Cytoplasmic segment spans residues 212–230; it reads PSLQVVLKSIMKAMIPLLQ. A helical transmembrane segment spans residues 231–250; the sequence is IGLLLFFAILIFAIIGLEFY. Residues 251–337 lie on the Extracellular side of the membrane; it reads MGKFHTTCFE…NSNDASGNTW (87 aa). Residue Asn-285 is glycosylated (N-linked (GlcNAc...) asparagine). Position 320 (Glu-320) interacts with Ca(2+). Residues 338-362 form a helical membrane-spanning segment; the sequence is NWLYFIPLIIIGSFFMLNLVLGVLS. Over 363–489 the chain is Cytoplasmic; that stretch reads GEFAKERERV…FYIRRMVKTQ (127 aa). The binding to the beta subunit stretch occupies residues 385 to 402; it reads QQIERELNGYMEWISKAE. Phosphothreonine is present on Thr-411. Phosphoserine is present on residues Ser-450 and Ser-453. One copy of the II repeat lies at 475–719; the sequence is ERRMRFYIRR…VFLAIAVDNL (245 aa). A helical transmembrane segment spans residues 490–509; sequence AFYWTVLSLVALNTLWLAIV. Topologically, residues 510-523 are extracellular; it reads HYNQPEWLSDFLYY. The chain crosses the membrane as a helical span at residues 524–543; that stretch reads AEFIFLGLFMSEMFIKMYGL. Residues 544-551 lie on the Cytoplasmic side of the membrane; sequence GTRPYFHS. The chain crosses the membrane as a helical span at residues 552-570; sequence SFNCFDCGVIIGSIFEVIW. Topologically, residues 571-580 are extracellular; that stretch reads AVIKPGTSFG. The chain crosses the membrane as a helical span at residues 581-599; the sequence is ISVLRALRLLRIFKVTKYW. The Cytoplasmic segment spans residues 600 to 618; the sequence is ASLRNLVVSLLNSMKSIIS. Residues 619–638 form a helical membrane-spanning segment; the sequence is LLFLLFLFIVVFALLGMQLF. The Extracellular portion of the chain corresponds to 639-691; that stretch reads GGQFNFDEGTPPTNFDTFPAAIMTVFQILTGEDWNEVMYDEIKSQGGVQGGMV. Glu-670 lines the Ca(2+) pocket. Residues 692–716 form a helical membrane-spanning segment; that stretch reads FSIYFIVLTLFGNYTLLNVFLAIAV. The Cytoplasmic segment spans residues 717-1190; it reads DNLANAQELT…TNPLRRLCHY (474 aa). A phosphoserine mark is found at Ser-752, Ser-755, and Ser-792. 4 stretches are compositionally biased toward basic and acidic residues: residues 814-824, 850-862, 871-924, and 932-958; these read PDVKTHLDRPL, RPRESARDPDARR, APGR…EGEP, and RPGDEPDDRPERRPRPRDATRPARAAD. Disordered regions lie at residues 814–1117 and 1137–1170; these read PDVK…RKPE and VNKNANPDPLPKKEEEKKEEEEADPGEDGPKPMP. 3 positions are modified to phosphoserine: Ser-1038, Ser-1042, and Ser-1051. Over residues 1056–1073 the composition is skewed to polar residues; sequence GNSTNPGPALATNPQNAA. Over residues 1074-1083 the composition is skewed to low complexity; that stretch reads SRRTPNNPGN. Over residues 1094-1111 the composition is skewed to polar residues; that stretch reads ENSLIVTNPSSTQPNSAK. Over residues 1153-1163 the composition is skewed to acidic residues; that stretch reads KKEEEEADPGE. Residues 1182–1465 form an III repeat; sequence NPLRRLCHYI…IFVALIIITF (284 aa). Residues 1191–1214 traverse the membrane as a helical segment; that stretch reads ILNLRYFEMCILMVIAMSSIALAA. Topologically, residues 1215–1231 are extracellular; it reads EDPVQPNAPRNNVLRYF. A helical membrane pass occupies residues 1232 to 1251; it reads DYVFTGVFTFEMVIKMIDLG. Over 1252–1258 the chain is Cytoplasmic; sequence LVLHQGA. Residues 1259-1282 traverse the membrane as a helical segment; that stretch reads YFRDLWNILDFIVVSGALVAFAFT. Over 1283–1293 the chain is Extracellular; it reads GNSKGKDINTI. The chain crosses the membrane as a helical span at residues 1294–1311; it reads KSLRVLRVLRPLKTIKRL. At 1312–1330 the chain is on the cytoplasmic side; it reads PKLKAVFDCVVNSLKNVFN. The chain crosses the membrane as a helical span at residues 1331–1350; the sequence is ILIVYMLFMFIFAVVAVQLF. At 1351–1437 the chain is on the extracellular side; the sequence is KGKFFHCTDE…QGPSPGYRME (87 aa). Glu-1411 is a Ca(2+) binding site. The chain crosses the membrane as a helical span at residues 1438–1462; the sequence is MSIFYVVYFVVFPFFFVNIFVALII. Residues 1463–1518 lie on the Cytoplasmic side of the membrane; the sequence is ITFQEQGDKMMEEYSLEKNERACIDFAISAKPLTRHMPQNKQSFQYRMWQFVVSPP. An IV repeat occupies 1502–1765; that stretch reads NKQSFQYRMW…LFVAVIMDNF (264 aa). A helical membrane pass occupies residues 1519-1537; the sequence is FEYTIMAMIALNTIVLMMK. The Extracellular portion of the chain corresponds to 1538–1551; it reads FYGASVAYENALRV. A helical membrane pass occupies residues 1552-1573; it reads FNIVFTSLFSLECVLKVMAFGI. Over 1574 to 1580 the chain is Cytoplasmic; it reads LNYFRDA. A helical transmembrane segment spans residues 1581-1600; the sequence is WNIFDFVTVLGSITDILVTE. Residues 1601 to 1607 lie on the Extracellular side of the membrane; it reads FGNNFIN. N-linked (GlcNAc...) asparagine glycosylation is present at Asn-1607. The helical transmembrane segment at 1608–1626 threads the bilayer; sequence LSFLRLFRAARLIKLLRQG. At 1627-1645 the chain is on the cytoplasmic side; it reads YTIRILLWTFVQSFKALPY. A helical transmembrane segment spans residues 1646-1665; it reads VCLLIAMLFFIYAIIGMQVF. Residues 1666-1737 are Extracellular-facing; the sequence is GNIGIDGEDE…IQKPECGNEF (72 aa). A helical membrane pass occupies residues 1738 to 1763; the sequence is AYFYFVSFIFLCSFLMLNLFVAVIMD. The Cytoplasmic segment spans residues 1764 to 2212; sequence NFEYLTRDSS…EGREHATHRQ (449 aa). A Phosphothreonine modification is found at Thr-1935. The tract at residues 1940–2212 is disordered; sequence QRMEPPSPTQ…EGREHATHRQ (273 aa). Polar residues-rich tracts occupy residues 1948 to 1963 and 1972 to 1997; these read TQEGGPSQNALPSTQL and QESSMKESPSWVTQRAQEMFQKTGTW. A phosphoserine mark is found at Ser-1998, Ser-2016, Ser-2028, Ser-2030, Ser-2071, and Ser-2091. Residues 2008–2017 show a composition bias toward polar residues; sequence PNSQPNSQSV. The segment covering 2018-2034 has biased composition (basic and acidic residues); it reads EMREMGTDGYSDSEHYL. Over residues 2064–2073 the composition is skewed to polar residues; the sequence is LSTISDTSPM. Composition is skewed to basic and acidic residues over residues 2085–2102 and 2143–2153; these read RRLDDYSLERVPPEENQR and PSKDRDQDRGR. The span at 2154–2172 shows a compositional bias: basic residues; sequence PKDRKHRPHHHHHHHHHHP. Residues 2173–2212 show a composition bias toward basic and acidic residues; that stretch reads PAPDRERYAQERPDTGRARAREQRWSRSPSEGREHATHRQ.

The protein belongs to the calcium channel alpha-1 subunit (TC 1.A.1.11) family. CACNA1A subfamily. In terms of assembly, voltage-dependent calcium channels are multisubunit complexes, consisting of alpha-1, alpha-2, beta and delta subunits in a 1:1:1:1 ratio. The channel activity is directed by the pore-forming and voltage-sensitive alpha-1 subunit. In many cases, this subunit is sufficient to generate voltage-sensitive calcium channel activity. The auxiliary subunits beta and alpha-2/delta linked by a disulfide bridge regulate the channel activity. Interacts (via C-terminal CDB motif) with CABP1 in the pre- and postsynaptic membranes. Interacts with the spider omega-agatoxin-IVA (AC P30288). Interacts with TSPOAP1. In terms of tissue distribution, brain specific. Purkinje cells contain predominantly P-type VSCC, the Q-type being a prominent calcium current in cerebellar granule cells. Also found in heart, in kidney distal convoluted tubule (DCT), and in pituitary.

It is found in the cell membrane. The catalysed reaction is Ca(2+)(in) = Ca(2+)(out). Functionally, voltage-sensitive calcium channels (VSCC) mediate the entry of calcium ions into excitable cells and are also involved in a variety of calcium-dependent processes, including muscle contraction, hormone or neurotransmitter release, gene expression, cell motility, cell division and cell death. The isoform alpha-1A gives rise to P and/or Q-type calcium currents. P/Q-type calcium channels belong to the 'high-voltage activated' (HVA) group and are specifically blocked by the spider omega-agatoxin-IVA (AC P30288). They are however insensitive to dihydropyridines (DHP). The chain is Voltage-dependent P/Q-type calcium channel subunit alpha-1A from Rattus norvegicus (Rat).